The following is an 84-amino-acid chain: Toxin Tf2 (84 aa).

Residues 1–20 form the signal peptide; that stretch reads MKRFLLFISILMMIGTIVVG. In terms of domain architecture, LCN-type CS-alpha/beta spans 21–83; that stretch reads KEGYAMDHEG…VWDYATNKCG (63 aa). Disulfide bonds link Cys-31–Cys-82, Cys-35–Cys-58, Cys-43–Cys-63, and Cys-47–Cys-65. The residue at position 82 (Cys-82) is a Cysteine amide.

Belongs to the long (4 C-C) scorpion toxin superfamily. Sodium channel inhibitor family. Beta subfamily. Post-translationally, contains 4 disulfide bonds. Expressed by the venom gland.

Its subcellular location is the secreted. In terms of biological role, beta toxins bind voltage-independently at site-4 of sodium channels (Nav) and shift the voltage of activation toward more negative potentials thereby affecting sodium channel activation and promoting spontaneous and repetitive firing. This toxin is active against hNav1.3/SCN3A. The chain is Toxin Tf2 from Tityus fasciolatus (Central Brazilian scorpion).